A 296-amino-acid polypeptide reads, in one-letter code: Protease HtpX homolog (296 aa).

2 helical membrane-spanning segments follow: residues V14 to L34 and Y39 to F59. Position 143 (H143) interacts with Zn(2+). E144 is a catalytic residue. H147 lines the Zn(2+) pocket. The next 2 helical transmembrane spans lie at I158 to F178 and I195 to V215. E224 is a binding site for Zn(2+).

The protein belongs to the peptidase M48B family. Requires Zn(2+) as cofactor.

Its subcellular location is the cell membrane. The sequence is that of Protease HtpX homolog from Streptococcus agalactiae serotype Ia (strain ATCC 27591 / A909 / CDC SS700).